The chain runs to 782 residues: Cleavage and polyadenylation specificity factor subunit 2 (782 aa).

Positions 407-416 (KKLEQSKEAD) are enriched in basic and acidic residues. Residues 407–449 (KKLEQSKEADIDSSDESDIEEDIDQPSAHKTKHDLMMKGEGSR) form a disordered region. A compositionally biased stretch (acidic residues) spans 417-430 (IDSSDESDIEEDID). A phosphoserine mark is found at Ser-419, Ser-420, and Ser-423. Positions 439-449 (HDLMMKGEGSR) are enriched in basic and acidic residues. Ser-660 bears the Phosphoserine mark.

This sequence belongs to the metallo-beta-lactamase superfamily. RNA-metabolizing metallo-beta-lactamase-like family. CPSF2/YSH1 subfamily. As to quaternary structure, component of the cleavage and polyadenylation specificity factor (CPSF) complex, composed of CPSF1, CPSF2, CPSF3, CPSF4 and FIP1L1. Interacts with CPSF3, CSTF2 and SYMPK. Interacts with ZC3H3.

It localises to the nucleus. Functionally, component of the cleavage and polyadenylation specificity factor (CPSF) complex that play a key role in pre-mRNA 3'-end formation, recognizing the AAUAAA signal sequence and interacting with poly(A) polymerase and other factors to bring about cleavage and poly(A) addition. Involved in the histone 3' end pre-mRNA processing. The polypeptide is Cleavage and polyadenylation specificity factor subunit 2 (CPSF2) (Homo sapiens (Human)).